A 505-amino-acid chain; its full sequence is Peroxisome proliferator-activated receptor gamma (505 aa).

A disordered region spans residues 1 to 26; that stretch reads MGETLGDSLIDPESDSFADTLSASTS. The segment covering 17–26 has biased composition (polar residues); sequence FADTLSASTS. Ser112 is modified (phosphoserine; by MAPK). The nuclear receptor DNA-binding region spans 136-210; it reads AIECRVCGDK…VGMSHNAIRF (75 aa). 2 NR C4-type zinc fingers span residues 139–159 and 176–198; these read CRVC…CEGC and CDLN…FQKC. The interaction with FAM120B stretch occupies residues 205–280; it reads HNAIRFGRMP…DKSPFVIYDM (76 aa). The NR LBD domain maps to 238 to 503; the sequence is DLRALAKHLY…HPLLQEIYKD (266 aa). A Glycyl lysine isopeptide (Lys-Gly) (interchain with G-Cter in ubiquitin) cross-link involves residue Lys252. Positions 495-503 match the 9aaTAD motif; the sequence is PLLQEIYKD.

The protein belongs to the nuclear hormone receptor family. NR1 subfamily. In terms of assembly, interacts with FOXO1 (acetylated form). Heterodimer with other nuclear receptors, such as RXRA. The heterodimer with the retinoic acid receptor RXRA is called adipocyte-specific transcription factor ARF6. Interacts with NCOA6 coactivator, leading to a strong increase in transcription of target genes. Interacts with coactivator PPARBP, leading to a mild increase in transcription of target genes. Interacts with NOCA7 in a ligand-inducible manner. Interacts with NCOA1 and NCOA2 LXXLL motifs. Interacts with ASXL1, ASXL2, DNTTIP2, FAM120B, MAP2K1/MEK1, NR0B2, PDPK1, PRDM16, PRMT2 and TGFB1I1. Interacts (when activated by agonist) with PPP5C. Interacts with HELZ2 and THRAP3; the interaction stimulates the transcriptional activity of PPARG. Interacts with PER2, the interaction is ligand dependent and blocks PPARG recruitment to target promoters. Interacts with NOCT. Interacts with ACTN4. Interacts (when in the liganded conformation) with GPS2. Interacts with CRY1 and CRY2 in a ligand-dependent manner. In the absence of hormonal ligand, interacts with TACC1. In macrophages, interacts with PAQR3 and STUB1; the interactions promote PPARG poylubiquitination and STUB1-mediated degradation. Phosphorylated at basal conditions and dephosphorylated when treated with the ligand. May be dephosphorylated by PPP5C. The phosphorylated form may be inactive and dephosphorylation induces adipogenic activity. Post-translationally, ubiquitinated by E3 ubiquitin-protein ligase complex containing FBXO9; leading to proteasomal degradation. Ubiquitinated at Lys-252 by TRIM55 leading to proteasomal degradation. Ubiquitinated by E3 ubiquitin-protein ligase STUB1/CHIP; leading to proteasomal degradation.

The protein localises to the nucleus. The protein resides in the cytoplasm. Its activity is regulated as follows. PDPK1 activates its transcriptional activity independently of its kinase activity. Nuclear receptor that binds peroxisome proliferators such as hypolipidemic drugs and fatty acids. Once activated by a ligand, the nuclear receptor binds to DNA specific PPAR response elements (PPRE) and modulates the transcription of its target genes, such as acyl-CoA oxidase. It therefore controls the peroxisomal beta-oxidation pathway of fatty acids. Key regulator of adipocyte differentiation and glucose homeostasis. ARF6 acts as a key regulator of the tissue-specific adipocyte P2 (aP2) enhancer. Acts as a critical regulator of gut homeostasis by suppressing NF-kappa-B-mediated pro-inflammatory responses. Plays a role in the regulation of cardiovascular circadian rhythms by regulating the transcription of BMAL1 in the blood vessels. This is Peroxisome proliferator-activated receptor gamma (PPARG) from Canis lupus familiaris (Dog).